We begin with the raw amino-acid sequence, 609 residues long: Dihydroxy-acid dehydratase (609 aa).

Asp-81 contacts Mg(2+). Cys-122 serves as a coordination point for [2Fe-2S] cluster. Residues Asp-123 and Lys-124 each coordinate Mg(2+). The residue at position 124 (Lys-124) is an N6-carboxylysine. Cys-195 serves as a coordination point for [2Fe-2S] cluster. Glu-491 is a binding site for Mg(2+). The Proton acceptor role is filled by Ser-517.

It belongs to the IlvD/Edd family. As to quaternary structure, homodimer. It depends on [2Fe-2S] cluster as a cofactor. The cofactor is Mg(2+).

It catalyses the reaction (2R)-2,3-dihydroxy-3-methylbutanoate = 3-methyl-2-oxobutanoate + H2O. The catalysed reaction is (2R,3R)-2,3-dihydroxy-3-methylpentanoate = (S)-3-methyl-2-oxopentanoate + H2O. It functions in the pathway amino-acid biosynthesis; L-isoleucine biosynthesis; L-isoleucine from 2-oxobutanoate: step 3/4. It participates in amino-acid biosynthesis; L-valine biosynthesis; L-valine from pyruvate: step 3/4. Functionally, functions in the biosynthesis of branched-chain amino acids. Catalyzes the dehydration of (2R,3R)-2,3-dihydroxy-3-methylpentanoate (2,3-dihydroxy-3-methylvalerate) into 2-oxo-3-methylpentanoate (2-oxo-3-methylvalerate) and of (2R)-2,3-dihydroxy-3-methylbutanoate (2,3-dihydroxyisovalerate) into 2-oxo-3-methylbutanoate (2-oxoisovalerate), the penultimate precursor to L-isoleucine and L-valine, respectively. The protein is Dihydroxy-acid dehydratase of Acinetobacter baumannii (strain ATCC 17978 / DSM 105126 / CIP 53.77 / LMG 1025 / NCDC KC755 / 5377).